Here is a 118-residue protein sequence, read N- to C-terminus: Large ribosomal subunit protein uL18 (118 aa).

The disordered stretch occupies residues 1–24 (MISKPDKNKIRQKRHRRVRGKLSG). Residues 10–20 (IRQKRHRRVRG) show a composition bias toward basic residues.

It belongs to the universal ribosomal protein uL18 family. In terms of assembly, part of the 50S ribosomal subunit; part of the 5S rRNA/L5/L18/L25 subcomplex. Contacts the 5S and 23S rRNAs.

In terms of biological role, this is one of the proteins that bind and probably mediate the attachment of the 5S RNA into the large ribosomal subunit, where it forms part of the central protuberance. The protein is Large ribosomal subunit protein uL18 of Streptococcus mutans serotype c (strain ATCC 700610 / UA159).